The sequence spans 547 residues: MDWGTELWDQFEVLERHTQWGLDLLDKYVKFVKERVEVEQSYAKQLRSLVKKYLPKRPAKDDPEIKFSQQQSFVQLLQEVNDFAGQRELVAESLGIRVCLELAKYSQEMKQERKMHFQEGRRAQQQLENGFKQLENSKRKFERDCREAEKAAHTAERLDQDINATKADVEKAKQQAHLRNHMAEESKNEYAAQLQRFNRDQAHFYFSQMPQIFDKLQDMDERRATRLGAGYGLLSEAELQVVPIIGKCLEGMKVAAESVDAKNDSKVLIELHKSGFARPGDLEFEDFSQVMNRVPSDSSLGTPDGRPELRAASSRSRAKRWPFGKKNKTVVTEDFSHLPPEQQRKRLQQQLEERNRELQKEEDQREALKKMKDVYEKTPQMGDPASLEPRIAETLGNIERLKLEVQKYEAWLAEAESRVLSNRGDSLSRHTRPPDPPTTAPPDSSSSSNNSGSQDNKESSEEPPSEEGQDTPIYTEFDEDFEEPASPIGQCVAIYHFEGSSEGTVSMSEGEDLSLMEEDKGDGWTRVRRKQGGEGYVPTSYLRVTLN.

Residues 1–117 (MDWGTELWDQ…EMKQERKMHF (117 aa)) form a required for translocation to the plasma membrane in response to insulin, podosome formation and interaction with AKAP9 and microtubules region. Residues 1–264 (MDWGTELWDQ…AAESVDAKND (264 aa)) enclose the F-BAR domain. A coiled-coil region spans residues 67–259 (FSQQQSFVQL…EGMKVAAESV (193 aa)). Residues 293-483 (RVPSDSSLGT…YTEFDEDFEE (191 aa)) are interaction with CDC42. The tract at residues 293-547 (RVPSDSSLGT…PTSYLRVTLN (255 aa)) is interaction with PDE6G. Residues 294–323 (VPSDSSLGTPDGRPELRAASSRSRAKRWPF) are disordered. Phosphoserine is present on residues Ser296, Ser298, and Ser299. Positions 332-425 (TEDFSHLPPE…ESRVLSNRGD (94 aa)) form a coiled coil. Residues 337–414 (HLPPEQQRKR…VQKYEAWLAE (78 aa)) form the REM-1 domain. Positions 415–547 (AESRVLSNRG…PTSYLRVTLN (133 aa)) are required for interaction with FASLG and localization to lysosomes. The interval 420-485 (LSNRGDSLSR…EFDEDFEEPA (66 aa)) is disordered. Residue Ser426 is modified to Phosphoserine. The interval 431–487 (TRPPDPPTTAPPDSSSSSNNSGSQDNKESSEEPPSEEGQDTPIYTEFDEDFEEPASP) is interaction with DNM2 and WASL. Low complexity predominate over residues 441 to 451 (PPDSSSSSNNS). The interaction with DNM1 and WASL stretch occupies residues 476–547 (EFDEDFEEPA…PTSYLRVTLN (72 aa)). The interval 484–547 (PASPIGQCVA…PTSYLRVTLN (64 aa)) is required for podosome formation. One can recognise an SH3 domain in the interval 486–547 (SPIGQCVAIY…PTSYLRVTLN (62 aa)). The tract at residues 490-547 (QCVAIYHFEGSSEGTVSMSEGEDLSLMEEDKGDGWTRVRRKQGGEGYVPTSYLRVTLN) is interaction with WAS. An interaction with ARHGAP17, DAAM1, DIAPH1 and DIAPH2 region spans residues 492-547 (VAIYHFEGSSEGTVSMSEGEDLSLMEEDKGDGWTRVRRKQGGEGYVPTSYLRVTLN).

This sequence belongs to the FNBP1 family. In terms of assembly, homodimerizes, the dimers can polymerize end-to-end to form filamentous structures. Interacts specifically with GTP-bound CDC42 and RHOQ. Interacts with AKAP9, ARHGAP17, DAAM1, DIAPH1, DIAPH2, DNM1, DNM2, FASLG/FASL, GAPVD1, LYN, microtubules, SRC, WAS/WASP and WASL/N-WASP. Interacts with the ligand binding domain of the thyroid receptor (TR) in the presence of thyroid hormone. May interact with CTNNB1 and HD/HTT. Interacts with PDE6G. Expressed in adrenal gland, aorta, brain, heart, kidney, liver, skeletal muscle and spleen.

It localises to the cytoplasm. The protein resides in the cytoskeleton. Its subcellular location is the cell cortex. The protein localises to the lysosome. It is found in the golgi apparatus. It localises to the cell membrane. The protein resides in the cell projection. Its subcellular location is the phagocytic cup. Its function is as follows. Required to coordinate membrane tubulation with reorganization of the actin cytoskeleton during endocytosis. Also acts as a link between CDC42 signaling and regulation of the actin cytoskeleton. Binds to lipids such as phosphatidylinositol 4,5-bisphosphate and phosphatidylserine and promotes membrane invagination and the formation of tubules. Also enhances actin polymerization in the vicinity of membrane tubules by recruiting WASL/N-WASP which in turn activates the Arp2/3 complex. Actin polymerization and dynamin may promote the fission of membrane tubules to form endocytic vesicles. Required for the formation of podosomes, actin-rich adhesion structures specific to monocyte-derived cells. Required for translocation of GLUT4 to the plasma membrane in response to insulin signaling. May be required for the lysosomal retention of FASLG/FASL. This Rattus norvegicus (Rat) protein is Cdc42-interacting protein 4 (Trip10).